The primary structure comprises 155 residues: 6,7-dimethyl-8-ribityllumazine synthase (155 aa).

Residues Phe22, 56–58, and 80–82 contribute to the 5-amino-6-(D-ribitylamino)uracil site; these read AFE and AVI. Residue 85–86 coordinates (2S)-2-hydroxy-3-oxobutyl phosphate; it reads NT. Residue His88 is the Proton donor of the active site. Phe113 is a 5-amino-6-(D-ribitylamino)uracil binding site. Position 127 (Arg127) interacts with (2S)-2-hydroxy-3-oxobutyl phosphate.

The protein belongs to the DMRL synthase family.

The catalysed reaction is (2S)-2-hydroxy-3-oxobutyl phosphate + 5-amino-6-(D-ribitylamino)uracil = 6,7-dimethyl-8-(1-D-ribityl)lumazine + phosphate + 2 H2O + H(+). It functions in the pathway cofactor biosynthesis; riboflavin biosynthesis; riboflavin from 2-hydroxy-3-oxobutyl phosphate and 5-amino-6-(D-ribitylamino)uracil: step 1/2. Catalyzes the formation of 6,7-dimethyl-8-ribityllumazine by condensation of 5-amino-6-(D-ribitylamino)uracil with 3,4-dihydroxy-2-butanone 4-phosphate. This is the penultimate step in the biosynthesis of riboflavin. The polypeptide is 6,7-dimethyl-8-ribityllumazine synthase (Streptococcus pneumoniae serotype 2 (strain D39 / NCTC 7466)).